The following is a 402-amino-acid chain: S-adenosylmethionine synthase (402 aa).

137-142 (GQGSAD) provides a ligand contact to ATP.

The protein belongs to the AdoMet synthase 2 family. It depends on Mg(2+) as a cofactor.

It catalyses the reaction L-methionine + ATP + H2O = S-adenosyl-L-methionine + phosphate + diphosphate. The protein operates within amino-acid biosynthesis; S-adenosyl-L-methionine biosynthesis; S-adenosyl-L-methionine from L-methionine: step 1/1. Functionally, catalyzes the formation of S-adenosylmethionine from methionine and ATP. The sequence is that of S-adenosylmethionine synthase from Pyrobaculum neutrophilum (strain DSM 2338 / JCM 9278 / NBRC 100436 / V24Sta) (Thermoproteus neutrophilus).